We begin with the raw amino-acid sequence, 233 residues long: MAKVSKRLAALKATVDRNKLYPVDEAISLVKGAATAKFDESIDVAVNLGVDPRKSDQVVRGSVVLPRGTGKSVRVAVFTQGANAEAAKAAGADIVGFEDLADEVKKGNLNFDVVIASPDAMRIVGQLGQILGPRGLMPNPKVGTVTPNVAEAVKNAKAGQVQYRTDKSGIIHATIGRASFDVEALRENLGALVDALQKAKPAASKGVYLKKIAVSSTMGVGVRVDQVTLVAQA.

It belongs to the universal ribosomal protein uL1 family. In terms of assembly, part of the 50S ribosomal subunit.

Functionally, binds directly to 23S rRNA. The L1 stalk is quite mobile in the ribosome, and is involved in E site tRNA release. Protein L1 is also a translational repressor protein, it controls the translation of the L11 operon by binding to its mRNA. This chain is Large ribosomal subunit protein uL1, found in Laribacter hongkongensis (strain HLHK9).